A 149-amino-acid chain; its full sequence is MKLTDYVKQVSLEDFGRPFIHHVQWNRRLRSTGGRFFPKDGHLDFNPKVYQELGLDVFRKIVRHELCHYHLYFQGKGYQHKDRDFKELLKAVDGLRFVPSLPNSNSKPLKLYRCQSCQQRYQRKRRIDTKRYRCGLCRGKLLLINQPED.

The SprT-like domain maps to 4-143 (TDYVKQVSLE…CGLCRGKLLL (140 aa)). Residue H64 participates in Zn(2+) binding. The active site involves E65. Zn(2+) is bound at residue H68.

The protein belongs to the SprT family. The cofactor is Zn(2+).

It is found in the cytoplasm. This Streptococcus pneumoniae (strain JJA) protein is Protein SprT-like.